Here is a 290-residue protein sequence, read N- to C-terminus: Glycine--tRNA ligase alpha subunit (290 aa).

Belongs to the class-II aminoacyl-tRNA synthetase family. In terms of assembly, tetramer of two alpha and two beta subunits.

It localises to the cytoplasm. The enzyme catalyses tRNA(Gly) + glycine + ATP = glycyl-tRNA(Gly) + AMP + diphosphate. The protein is Glycine--tRNA ligase alpha subunit of Prochlorococcus marinus (strain NATL1A).